Here is a 275-residue protein sequence, read N- to C-terminus: tRNA pseudouridine synthase A (275 aa).

Residue Asp55 is the Nucleophile of the active site. Tyr111 serves as a coordination point for substrate.

It belongs to the tRNA pseudouridine synthase TruA family.

The enzyme catalyses uridine(38/39/40) in tRNA = pseudouridine(38/39/40) in tRNA. In terms of biological role, formation of pseudouridine at positions 38, 39 and 40 in the anticodon stem and loop of transfer RNAs. This Methanococcoides burtonii (strain DSM 6242 / NBRC 107633 / OCM 468 / ACE-M) protein is tRNA pseudouridine synthase A.